A 228-amino-acid polypeptide reads, in one-letter code: MTMDGVFPLTATVDYCDIFLTHDSASVRKAHNTGWKHKMQVEHYYNAEVDPAKIQSVIDNVTKAYIDAGLPGFPELIAVGVNGQRGQPVGGPPRPPQPFHNGGRPGPPGRPPMGMFPPQRPMMPPPHMRPGLSQMPPGMRPPGPPPHGFMNGSMPPPLGTPVMENGPVAGQQSQAPVAPRIHPDRLRLAGNSIKSKLVIESIYCFYPFGCLDSQIATHTFLYHCANDS.

The Matrin-type; degenerate zinc-finger motif lies at 11-43; that stretch reads ATVDYCDIFLTHDSASVRKAHNTGWKHKMQVEH. A disordered region spans residues 83-127; the sequence is GQRGQPVGGPPRPPQPFHNGGRPGPPGRPPMGMFPPQRPMMPPPH. Pro residues predominate over residues 105–127; that stretch reads PGPPGRPPMGMFPPQRPMMPPPH.

This sequence belongs to the U1 small nuclear ribonucleoprotein C family. In terms of assembly, U1 snRNP is composed of the 7 core Sm proteins B/B', D1, D2, D3, E, F and G that assemble in a heptameric protein ring on the Sm site of the small nuclear RNA to form the core snRNP, and at least 3 U1 snRNP-specific proteins U1-70K, U1-A and U1-C. U1-C interacts with U1 snRNA and the 5' splice-site region of the pre-mRNA.

It is found in the nucleus. In terms of biological role, component of the spliceosomal U1 snRNP, which is essential for recognition of the pre-mRNA 5' splice-site and the subsequent assembly of the spliceosome. U1-C is directly involved in initial 5' splice-site recognition for both constitutive and regulated alternative splicing. The interaction with the 5' splice-site seems to precede base-pairing between the pre-mRNA and the U1 snRNA. Stimulates commitment or early (E) complex formation by stabilizing the base pairing of the 5' end of the U1 snRNA and the 5' splice-site region. The sequence is that of U1 small nuclear ribonucleoprotein C from Batrachochytrium dendrobatidis (strain JAM81 / FGSC 10211) (Frog chytrid fungus).